The following is a 687-amino-acid chain: Solute carrier organic anion transporter family member 1B2 (687 aa).

The Cytoplasmic portion of the chain corresponds to 1–28 (MDHTQQSRKAAEAQPSRSKQTRFCDGFK). Residues 29–48 (LFLAALSFSYICKALGGVVM) form a helical membrane-spanning segment. Over 49–67 (KSSITQIERRFDIPSSISG) the chain is Extracellular. Residues 68 to 88 (LIDGGFEIGNLLVIVFVSYFG) traverse the membrane as a helical segment. The Cytoplasmic segment spans residues 89–94 (SKLHRP). The helical transmembrane segment at 95-119 (KLIGIGCFIMGIGSILTALPHFFMG) threads the bilayer. Residues 120 to 165 (YYKYAKENDIGSLGNSTLTCFINQMTSPTGPSPEIVEKGCEKGLKS) lie on the Extracellular side of the membrane. N-linked (GlcNAc...) asparagine glycosylation occurs at N134. The chain crosses the membrane as a helical span at residues 166 to 194 (HMWIYVLMGNMLRGIGETPIVPLGISYLD). Over 195-213 (DFAKEGHTSMHLGTLHTIA) the chain is Cytoplasmic. The helical transmembrane segment at 214 to 234 (MIGPILGFIMSSVFAKIYVDV) threads the bilayer. The Extracellular portion of the chain corresponds to 235–252 (GYVDLNSVRITPNDARWV). The chain crosses the membrane as a helical span at residues 253–277 (GAWWLSFIVNGLLCITSSIPFFFLP). The Cytoplasmic portion of the chain corresponds to 278-328 (KIPKRSQEERKNSVSLHAPKTDEEKKHMTNLTKQEEQDPSNMTGFLRSLRS). The tract at residues 286–311 (ERKNSVSLHAPKTDEEKKHMTNLTKQ) is disordered. Phosphoserine occurs at positions 290 and 292. A helical membrane pass occupies residues 329–350 (ILTNEIYVIFLILTLLQVSGFI). Residues 351–370 (GSFTYLFKFIEQQFGRTASQ) are Extracellular-facing. A helical transmembrane segment spans residues 371 to 394 (ANFLLGIITIPTMATAMFLGGYIV). Topologically, residues 395-398 (KKFK) are cytoplasmic. A helical transmembrane segment spans residues 399–422 (LTSVGIAKFVFFTSSVAYAFQFLY). Over 423 to 531 (FPLLCENKPF…YKCKTNYYFY (109 aa)) the chain is Extracellular. The Kazal-like domain maps to 450 to 507 (DVPLSYCNSDCSCDKNQWEPICGENGVTYISPCLAGCKSFRGDKKPNNTEFYDCSCIS). 3 cysteine pairs are disulfide-bonded: C456–C486, C462–C482, and C471–C505. Residues N496 and N511 are each glycosylated (N-linked (GlcNAc...) asparagine). A helical membrane pass occupies residues 532–554 (IILQVTVSFFTAMGSPSLILILM). Topologically, residues 555 to 563 (KSVQPELKS) are cytoplasmic. Residues 564–589 (LAMGFHSLIIRALGGILAPIYYGAFI) traverse the membrane as a helical segment. The Extracellular segment spans residues 590–623 (DRTCIKWSVTSCGKRGACRLYNSRLFGFSYLGLN). A helical membrane pass occupies residues 624–641 (LALKTPPLFLYVVLIYFT). Topologically, residues 642–687 (KRKYKRNDNKTLENGRQFTDEGNPDSVNKNGYYCVPYDEQSNETPL) are cytoplasmic. T660 is modified (phosphothreonine). S667 carries the phosphoserine modification.

It belongs to the organo anion transporter (TC 2.A.60) family. Liver specific. Expression is highest in central perivenous hepatocytes and lowest in the periportal region. Isoform 1 predominates. Not detected in heart, brain, kidney, skeletal muscle, lung, testis or spleen.

The protein localises to the basolateral cell membrane. The catalysed reaction is estrone 3-sulfate(out) = estrone 3-sulfate(in). It carries out the reaction taurocholate(out) = taurocholate(in). It catalyses the reaction prostaglandin E2(out) = prostaglandin E2(in). The enzyme catalyses L-thyroxine(out) = L-thyroxine(in). Functionally, mediates the Na(+)-independent uptake of organic anions such as taurochlate, bromosulfophthalein and steroid conjugates (estrone 3-sulfate, 17-beta-glucuronosyl estradiol, dehydroepiandrosterone sulfate). Also transports prostaglandin E2 and L-thyroxine (T4). Shows a pH-sensitive substrate specificity which may be ascribed to the protonation state of the binding site and leads to a stimulation of substrate transport in an acidic microenvironment. Hydrogencarbonate/HCO3(-) acts as the probable counteranion that exchanges for organic anions. The chain is Solute carrier organic anion transporter family member 1B2 (Slco1b2) from Rattus norvegicus (Rat).